We begin with the raw amino-acid sequence, 266 residues long: Methionine aminopeptidase (266 aa).

H80 serves as a coordination point for substrate. D98, D109, and H172 together coordinate a divalent metal cation. Position 179 (H179) interacts with substrate. Residues E206 and E237 each coordinate a divalent metal cation.

This sequence belongs to the peptidase M24A family. Methionine aminopeptidase type 1 subfamily. As to quaternary structure, monomer. The cofactor is Co(2+). It depends on Zn(2+) as a cofactor. Mn(2+) is required as a cofactor. Requires Fe(2+) as cofactor.

The catalysed reaction is Release of N-terminal amino acids, preferentially methionine, from peptides and arylamides.. Functionally, removes the N-terminal methionine from nascent proteins. The N-terminal methionine is often cleaved when the second residue in the primary sequence is small and uncharged (Met-Ala-, Cys, Gly, Pro, Ser, Thr, or Val). Requires deformylation of the N(alpha)-formylated initiator methionine before it can be hydrolyzed. This chain is Methionine aminopeptidase, found in Buchnera aphidicola subsp. Baizongia pistaciae (strain Bp).